A 258-amino-acid polypeptide reads, in one-letter code: Sec-independent protein translocase protein TatC (258 aa).

The Cytoplasmic portion of the chain corresponds to 2 to 23 (SVEDTQPLITHLIELRKRLLNC). The helical transmembrane segment at 24–44 (IISVIVIFLCLVYFANDIYHL) threads the bilayer. The Periplasmic segment spans residues 45–75 (VSAPLIKQLPQGSTMIATDVASPFFTPIKLT). A helical transmembrane segment spans residues 76–96 (FMVSLILSAPVILYQVWAFIA). Residues 97-115 (PALYKHERRLVVPLLVSSS) lie on the Cytoplasmic side of the membrane. The chain crosses the membrane as a helical span at residues 116 to 136 (LLFYIGMAFAYFVVFPLAFGF). The Periplasmic segment spans residues 137 to 156 (LANTAPEGVQVSTDIASYLS). The chain crosses the membrane as a helical span at residues 157–177 (FVMALFMAFGVSFEVPVAIVL). Topologically, residues 178–192 (LCWMGITSPEDLRKK) are cytoplasmic. The helical transmembrane segment at 193–210 (RPYVLVGAFVVGMLLTPP) threads the bilayer. Residue D211 is a topological domain, periplasmic. The helical transmembrane segment at 212-232 (VFSQTLLAIPMYCLFEIGVFF) threads the bilayer. Residues 233–258 (SRFYVGKGRNREEENDAEAESEKTEE) are Cytoplasmic-facing.

This sequence belongs to the TatC family. The Tat system comprises two distinct complexes: a TatABC complex, containing multiple copies of TatA, TatB and TatC subunits, and a separate TatA complex, containing only TatA subunits. Substrates initially bind to the TatABC complex, which probably triggers association of the separate TatA complex to form the active translocon.

Its subcellular location is the cell inner membrane. In terms of biological role, part of the twin-arginine translocation (Tat) system that transports large folded proteins containing a characteristic twin-arginine motif in their signal peptide across membranes. Together with TatB, TatC is part of a receptor directly interacting with Tat signal peptides. In Escherichia coli O6:H1 (strain CFT073 / ATCC 700928 / UPEC), this protein is Sec-independent protein translocase protein TatC.